Consider the following 151-residue polypeptide: uncharacterized protein (151 aa).

The signal sequence occupies residues 1-32; the sequence is MEEAEKAKRRSIELLNETRNCAYSSFVALAEA. Residues 45 to 67 traverse the membrane as a helical segment; it reads AIGFAGGISGSGHICGALWGSIA.

It is found in the membrane. This is an uncharacterized protein from Archaeoglobus fulgidus (strain ATCC 49558 / DSM 4304 / JCM 9628 / NBRC 100126 / VC-16).